The chain runs to 747 residues: Tegument protein UL46 homolog (747 aa).

4 disordered regions span residues 437-484 (FCCP…SPRT), 525-593 (QRSD…DYMR), 611-665 (TPYM…PEVV), and 689-747 (SASR…VSSL). Over residues 465-484 (LRSSRQLPTSPPSNIVSPRT) the composition is skewed to polar residues. Over residues 528–540 (DSSSSDNSTCSST) the composition is skewed to low complexity. Positions 541-553 (ETQYITLPSTPSP) are enriched in polar residues. Composition is skewed to basic and acidic residues over residues 707–724 (VCRE…DGFI) and 736–747 (KHPDQTERVSSL).

It belongs to the herpesviridae HHV-1 VP11/12 protein family.

The protein resides in the virion tegument. It is found in the host cell membrane. Functionally, modulates alpha trans-inducing factor-dependent activation of alpha genes. The chain is Tegument protein UL46 homolog from Equine herpesvirus 1 (strain Ab4p) (EHV-1).